Reading from the N-terminus, the 78-residue chain is Small ribosomal subunit protein eS17 (78 aa).

It belongs to the eukaryotic ribosomal protein eS17 family.

The polypeptide is Small ribosomal subunit protein eS17 (Sulfurisphaera tokodaii (strain DSM 16993 / JCM 10545 / NBRC 100140 / 7) (Sulfolobus tokodaii)).